Reading from the N-terminus, the 652-residue chain is p-hydroxybenzoic acid efflux pump subunit AaeB (652 aa).

Helical transmembrane passes span 8–28 (FPIK…HFNL), 34–54 (AVMT…GDPF), 64–84 (LRII…IATI), 88–108 (ALMM…SSLI), 118–138 (LAGY…SVLL), 149–169 (EIII…PRSV), 367–387 (LFWL…LAVI), 404–424 (FLYG…VIMP), 429–449 (SMLL…ILIQ), 453–473 (IGTL…NPMT), and 480–500 (LDNA…ILLI).

It belongs to the aromatic acid exporter ArAE (TC 2.A.85) family.

It is found in the cell inner membrane. Its function is as follows. Forms an efflux pump with AaeA. Could function as a metabolic relief valve, allowing to eliminate certain compounds when they accumulate to high levels in the cell. This Erwinia billingiae (strain Eb661) protein is p-hydroxybenzoic acid efflux pump subunit AaeB.